Reading from the N-terminus, the 216-residue chain is Endo-1,4-beta-xylanase 1 (216 aa).

A signal peptide spans 1–19 (MFLTSVVSLVVGAISCVSA). The GH11 domain occupies 29-216 (QMTPRNSCYG…SSGSASITVS (188 aa)). Glu-112 (nucleophile) is an active-site residue. Glu-203 functions as the Proton donor in the catalytic mechanism.

The protein belongs to the glycosyl hydrolase 11 (cellulase G) family.

The protein resides in the secreted. The enzyme catalyses Endohydrolysis of (1-&gt;4)-beta-D-xylosidic linkages in xylans.. The protein operates within glycan degradation; xylan degradation. Its function is as follows. Endo-1,4-beta-xylanase involved in the hydrolysis of xylan, a major structural heterogeneous polysaccharide found in plant biomass representing the second most abundant polysaccharide in the biosphere, after cellulose. The protein is Endo-1,4-beta-xylanase 1 (xyl1) of Claviceps purpurea (Ergot fungus).